Consider the following 84-residue polypeptide: Translation initiation factor IF-1, chloroplastic (84 aa).

Residues 1–72 (MKKQNLVEME…SKGRITYRLR (72 aa)) form the S1-like domain.

Belongs to the IF-1 family. In terms of assembly, component of the 30S ribosomal translation pre-initiation complex which assembles on the 30S ribosome in the order IF-2 and IF-3, IF-1 and N-formylmethionyl-tRNA(fMet); mRNA recruitment can occur at any time during PIC assembly.

It is found in the plastid. The protein resides in the chloroplast. In terms of biological role, one of the essential components for the initiation of protein synthesis. Stabilizes the binding of IF-2 and IF-3 on the 30S subunit to which N-formylmethionyl-tRNA(fMet) subsequently binds. Helps modulate mRNA selection, yielding the 30S pre-initiation complex (PIC). Upon addition of the 50S ribosomal subunit IF-1, IF-2 and IF-3 are released leaving the mature 70S translation initiation complex. The chain is Translation initiation factor IF-1, chloroplastic from Spirogyra maxima (Green alga).